The primary structure comprises 723 residues: Fatty acid oxidation complex subunit alpha (723 aa).

Positions 1 to 189 (MIYQAKTLQV…KVGLLDAIVD (189 aa)) are enoyl-CoA hydratase/isomerase. Position 296 (Asp296) interacts with substrate. Positions 311–723 (SQDTQHAAVL…FYSAQQVSAL (413 aa)) are 3-hydroxyacyl-CoA dehydrogenase. NAD(+) contacts are provided by residues Met325, Asp344, 401–403 (VVE), Lys408, and Ser430. Catalysis depends on His451, which acts as the For 3-hydroxyacyl-CoA dehydrogenase activity. Asn454 provides a ligand contact to NAD(+). 2 residues coordinate substrate: Asn501 and Tyr661.

The protein in the N-terminal section; belongs to the enoyl-CoA hydratase/isomerase family. It in the C-terminal section; belongs to the 3-hydroxyacyl-CoA dehydrogenase family. Heterotetramer of two alpha chains (FadB) and two beta chains (FadA).

The catalysed reaction is a (3S)-3-hydroxyacyl-CoA + NAD(+) = a 3-oxoacyl-CoA + NADH + H(+). The enzyme catalyses a (3S)-3-hydroxyacyl-CoA = a (2E)-enoyl-CoA + H2O. It carries out the reaction a 4-saturated-(3S)-3-hydroxyacyl-CoA = a (3E)-enoyl-CoA + H2O. It catalyses the reaction (3S)-3-hydroxybutanoyl-CoA = (3R)-3-hydroxybutanoyl-CoA. The catalysed reaction is a (3Z)-enoyl-CoA = a 4-saturated (2E)-enoyl-CoA. The enzyme catalyses a (3E)-enoyl-CoA = a 4-saturated (2E)-enoyl-CoA. It participates in lipid metabolism; fatty acid beta-oxidation. Functionally, involved in the aerobic and anaerobic degradation of long-chain fatty acids via beta-oxidation cycle. Catalyzes the formation of 3-oxoacyl-CoA from enoyl-CoA via L-3-hydroxyacyl-CoA. It can also use D-3-hydroxyacyl-CoA and cis-3-enoyl-CoA as substrate. In Vibrio cholerae serotype O1 (strain ATCC 39315 / El Tor Inaba N16961), this protein is Fatty acid oxidation complex subunit alpha.